We begin with the raw amino-acid sequence, 127 residues long: Small ribosomal subunit protein uS12 (127 aa).

At Asp-89 the chain carries 3-methylthioaspartic acid.

This sequence belongs to the universal ribosomal protein uS12 family. As to quaternary structure, part of the 30S ribosomal subunit. Contacts proteins S8 and S17. May interact with IF1 in the 30S initiation complex.

With S4 and S5 plays an important role in translational accuracy. In terms of biological role, interacts with and stabilizes bases of the 16S rRNA that are involved in tRNA selection in the A site and with the mRNA backbone. Located at the interface of the 30S and 50S subunits, it traverses the body of the 30S subunit contacting proteins on the other side and probably holding the rRNA structure together. The combined cluster of proteins S8, S12 and S17 appears to hold together the shoulder and platform of the 30S subunit. This chain is Small ribosomal subunit protein uS12, found in Campylobacter lari (strain RM2100 / D67 / ATCC BAA-1060).